A 178-amino-acid chain; its full sequence is Peptide deformylase 2 (178 aa).

Residues Cys101 and His143 each contribute to the Fe cation site. Glu144 is an active-site residue. His147 serves as a coordination point for Fe cation.

The protein belongs to the polypeptide deformylase family. Requires Fe(2+) as cofactor.

It catalyses the reaction N-terminal N-formyl-L-methionyl-[peptide] + H2O = N-terminal L-methionyl-[peptide] + formate. In terms of biological role, removes the formyl group from the N-terminal Met of newly synthesized proteins. Requires at least a dipeptide for an efficient rate of reaction. N-terminal L-methionine is a prerequisite for activity but the enzyme has broad specificity at other positions. The sequence is that of Peptide deformylase 2 from Pseudomonas putida (strain ATCC 47054 / DSM 6125 / CFBP 8728 / NCIMB 11950 / KT2440).